The primary structure comprises 250 residues: 2,3-bisphosphoglycerate-dependent phosphoglycerate mutase (250 aa).

Substrate contacts are provided by residues 8 to 15 (RHGESQWN), 21 to 22 (TG), R60, 87 to 90 (ERHY), K98, 114 to 115 (RR), and 183 to 184 (GN). The active-site Tele-phosphohistidine intermediate is H9. E87 functions as the Proton donor/acceptor in the catalytic mechanism.

It belongs to the phosphoglycerate mutase family. BPG-dependent PGAM subfamily. In terms of assembly, homodimer.

It carries out the reaction (2R)-2-phosphoglycerate = (2R)-3-phosphoglycerate. The protein operates within carbohydrate degradation; glycolysis; pyruvate from D-glyceraldehyde 3-phosphate: step 3/5. Its function is as follows. Catalyzes the interconversion of 2-phosphoglycerate and 3-phosphoglycerate. The chain is 2,3-bisphosphoglycerate-dependent phosphoglycerate mutase from Bordetella pertussis (strain Tohama I / ATCC BAA-589 / NCTC 13251).